The chain runs to 424 residues: DNA primase DnaG (424 aa).

The Toprim domain occupies 166-241; it reads DTIIIVEGRA…KVDFIARAPE (76 aa). Glutamate 172, aspartate 215, and aspartate 217 together coordinate Mg(2+).

This sequence belongs to the archaeal DnaG primase family. In terms of assembly, forms a ternary complex with MCM helicase and DNA. Component of the archaeal exosome complex. Requires Mg(2+) as cofactor.

It catalyses the reaction ssDNA + n NTP = ssDNA/pppN(pN)n-1 hybrid + (n-1) diphosphate.. Functionally, RNA polymerase that catalyzes the synthesis of short RNA molecules used as primers for DNA polymerase during DNA replication. Also part of the exosome, which is a complex involved in RNA degradation. Acts as a poly(A)-binding protein that enhances the interaction between heteromeric, adenine-rich transcripts and the exosome. The polypeptide is DNA primase DnaG (Staphylothermus marinus (strain ATCC 43588 / DSM 3639 / JCM 9404 / F1)).